The sequence spans 1168 residues: MNRKKGDKGFESPRPYKLTHQVVCINNINFQRKSVVGYVELTIFPTVANLNRIKLNSKQCRIYRVRVNDLEAAFIYNDPTLEVCHHESKQRNLNYFSNAYAAAVSAVDPDAGNGELCIKVPSELWKHVDELKVLKVHINFSLDQPKGGLHFVVPNMEGSMAERGAHVFSCGYQNSTRFWFPCVDSYSELCTWKLEYTVDAAMVAVSNGDLVETVYTHDMRKKTFHYMLAIPTAASNISLAIGPFEILVDPYMHEVTHFCLPQLLPLLKHTTSYLHEVFEFYEEILTCRYPYSCFKTVFIDEAYVEVAAYASMSIFSTNLLHSAMIIDETPLTRRCLAQALAQQFFGCFISRMSWSDEWVLKGISGYIYGLWMKKTFGVNEYRHWIKQELDQIVAYELKTGGVLLHPIFGGGKEKDNPASHLHFSIKHPHTLSWEYYTMFQCKAHLVMRLIENRISMEFMLQVFNKLLSLASTASSQKFQSHMWSQMLVSTSGFLKSISNVSGKDIQPLIKQWVDQSGVVKFYGSFAFNRKRNVLELEIKQDYTSPGTQKYVGPLKVTVQELDGSFNHTLQIEENSLKHDIPCHSKSRRNKKKKIPLMNGEEVDMDLSAMDADSPLLWIRIDPDMSVLRKVEFEQSDFMWQYQLRYERDVVAQEEAILALEKFPTPASRLALTDILEQEQCFYRVRMLACFCLAKIANSMVSTWTGPPAMKSLFTRMFCCKTCPNIVKTNNFMNFQSYFLQKTMPVAMALLRDVHNLCPKEVLMFILDLIKYNDNRKNKFSDNYYRAELIDALANSVTPAVSVNNEVRTLDNLNPDVRLILEEITRFLNMEKLLPSYRHTITVSCLKAIRVLQKNGHVPSDPALFKSYAEYGHFVDVRIAALEAVVDYTKVDRSYEELQWLLTMVQNDPVPYIRHKILDMLTKNPPFTKNMESPLCNEALVDQLWKLMNSGTSHDWRLRCGAVDLYFTLFGLSRPSCLPLPELGLVLNLKEKKAVLNPTIIPESVANNQEPVNTTNNHGQPVVFQNTEDDHLIKETASSISGHQQGVKRKADMPLGSPLEPGQILEKNEDSKVKLKIRFSNSQEEEEIDMDTVHDSQAFIYHHLNMLERPSTPGKEQSSGEVTMHPVSAAPLSVFSKESNSSKHSDHHHHHHHEHKKKKKKTLQVWIRP.

Disordered regions lie at residues 1039 to 1066 (ISGH…ILEK) and 1135 to 1168 (SKES…WIRP). Residues 1144 to 1161 (SDHHHHHHHEHKKKKKKT) show a composition bias toward basic residues.

It belongs to the TAF2 family. Component of the TFIID basal transcription factor complex, composed of TATA-box-binding protein TBP, and a number of TBP-associated factors (TAFs).

The protein localises to the nucleus. The TFIID basal transcription factor complex plays a major role in the initiation of RNA polymerase II (Pol II)-dependent transcription. TFIID recognizes and binds promoters with or without a TATA box via its subunit TBP, a TATA-box-binding protein, and promotes assembly of the pre-initiation complex (PIC). The TFIID complex consists of TBP and TBP-associated factors (TAFs). The protein is Transcription initiation factor TFIID subunit 2 (TAF2) of Gallus gallus (Chicken).